Here is a 340-residue protein sequence, read N- to C-terminus: Ketol-acid reductoisomerase (NADP(+)) (340 aa).

One can recognise a KARI N-terminal Rossmann domain in the interval 1-183 (MAITVYYDKD…GGGRTGIIET (183 aa)). NADP(+)-binding positions include 26–29 (FGSQ), Arg-49, Ser-52, Ser-54, and 84–87 (DEIQ). His-109 is an active-site residue. Residue Gly-135 participates in NADP(+) binding. Residues 184-329 (TFKAETETDL…RNLRAMMPWI (146 aa)) form the KARI C-terminal knotted domain. 4 residues coordinate Mg(2+): Asp-192, Glu-196, Glu-228, and Glu-232. Ser-253 is a substrate binding site.

It belongs to the ketol-acid reductoisomerase family. The cofactor is Mg(2+).

The enzyme catalyses (2R)-2,3-dihydroxy-3-methylbutanoate + NADP(+) = (2S)-2-acetolactate + NADPH + H(+). It catalyses the reaction (2R,3R)-2,3-dihydroxy-3-methylpentanoate + NADP(+) = (S)-2-ethyl-2-hydroxy-3-oxobutanoate + NADPH + H(+). Its pathway is amino-acid biosynthesis; L-isoleucine biosynthesis; L-isoleucine from 2-oxobutanoate: step 2/4. It participates in amino-acid biosynthesis; L-valine biosynthesis; L-valine from pyruvate: step 2/4. Its function is as follows. Involved in the biosynthesis of branched-chain amino acids (BCAA). Catalyzes an alkyl-migration followed by a ketol-acid reduction of (S)-2-acetolactate (S2AL) to yield (R)-2,3-dihydroxy-isovalerate. In the isomerase reaction, S2AL is rearranged via a Mg-dependent methyl migration to produce 3-hydroxy-3-methyl-2-ketobutyrate (HMKB). In the reductase reaction, this 2-ketoacid undergoes a metal-dependent reduction by NADPH to yield (R)-2,3-dihydroxy-isovalerate. In Campylobacter jejuni subsp. jejuni serotype O:23/36 (strain 81-176), this protein is Ketol-acid reductoisomerase (NADP(+)).